The primary structure comprises 59 residues: MKNIKITQIKSAIGRLPKHKKTLIGLGLRYIGHTVIREDTPSIQGMVKKISYILKIQEE.

It belongs to the universal ribosomal protein uL30 family. In terms of assembly, part of the 50S ribosomal subunit.

This chain is Large ribosomal subunit protein uL30, found in Buchnera aphidicola subsp. Acyrthosiphon pisum (strain 5A).